Here is a 146-residue protein sequence, read N- to C-terminus: Large ribosomal subunit protein uL15 (146 aa).

The segment at 1 to 65 is disordered; it reads MSDIQLNTLK…GQMPLQRRLP (65 aa). The segment covering 24–34 has biased composition (gly residues); sequence RGIGSGLGKTA.

This sequence belongs to the universal ribosomal protein uL15 family. As to quaternary structure, part of the 50S ribosomal subunit.

Binds to the 23S rRNA. The protein is Large ribosomal subunit protein uL15 of Bordetella petrii (strain ATCC BAA-461 / DSM 12804 / CCUG 43448).